The primary structure comprises 299 residues: Tyrosine recombinase XerC (299 aa).

A Core-binding (CB) domain is found at 1–85; it reads MEQHLDAYCM…AVRGFYKYLN (85 aa). One can recognise a Tyr recombinase domain in the interval 106 to 285; sequence RLPKTLDTDR…DFQHLATVYD (180 aa). Active-site residues include Arg146, Lys170, His237, Arg240, and His263. Tyr272 functions as the O-(3'-phospho-DNA)-tyrosine intermediate in the catalytic mechanism.

Belongs to the 'phage' integrase family. XerC subfamily. In terms of assembly, forms a cyclic heterotetrameric complex composed of two molecules of XerC and two molecules of XerD.

It is found in the cytoplasm. Site-specific tyrosine recombinase, which acts by catalyzing the cutting and rejoining of the recombining DNA molecules. The XerC-XerD complex is essential to convert dimers of the bacterial chromosome into monomers to permit their segregation at cell division. It also contributes to the segregational stability of plasmids. The polypeptide is Tyrosine recombinase XerC (Pseudomonas savastanoi pv. phaseolicola (strain 1448A / Race 6) (Pseudomonas syringae pv. phaseolicola (strain 1448A / Race 6))).